Consider the following 241-residue polypeptide: Uracil-DNA glycosylase (241 aa).

Residue D71 is the Proton acceptor of the active site.

This sequence belongs to the uracil-DNA glycosylase (UDG) superfamily. UNG family.

Its subcellular location is the cytoplasm. It catalyses the reaction Hydrolyzes single-stranded DNA or mismatched double-stranded DNA and polynucleotides, releasing free uracil.. In terms of biological role, excises uracil residues from the DNA which can arise as a result of misincorporation of dUMP residues by DNA polymerase or due to deamination of cytosine. This chain is Uracil-DNA glycosylase, found in Xanthomonas axonopodis pv. citri (strain 306).